The chain runs to 257 residues: Snake venom serine protease serpentokallikrein-2 (257 aa).

Positions 1–18 are cleaved as a signal peptide; that stretch reads MVLIRVLANLLILQLSYA. A propeptide spanning residues 19-24 is cleaved from the precursor; that stretch reads QKSSEL. Residues 25-248 enclose the Peptidase S1 domain; that stretch reads VIGGDECNIN…HLDWIKGIIA (224 aa). 6 disulfides stabilise this stretch: Cys-31-Cys-162, Cys-49-Cys-65, Cys-97-Cys-255, Cys-141-Cys-209, Cys-173-Cys-188, and Cys-199-Cys-224. The Charge relay system role is filled by His-64. Asn-102 carries N-linked (GlcNAc...) asparagine glycosylation. The active-site Charge relay system is Asp-109. Ser-203 functions as the Charge relay system in the catalytic mechanism.

This sequence belongs to the peptidase S1 family. Snake venom subfamily. Monomer. Expressed by the venom gland.

Its subcellular location is the secreted. Its function is as follows. Snake venom serine protease that may act in the hemostasis system of the prey. This chain is Snake venom serine protease serpentokallikrein-2, found in Protobothrops mucrosquamatus (Taiwan habu).